Here is a 331-residue protein sequence, read N- to C-terminus: MALPEFTMRQLLEAGVHFGHQSHRWNPKMAEYIFGARNNIHIIDLAQTVPLMHRALQAISDTVAKGGRVLFVGTKRQAQDAVADAAKRSAQYFVNSRWLGGTLTNWKTISGSIKRLRHLDDVLNSGDASAYTKKERLTLQRERDKLDRSLGGIKDMGGLPDLIFVIDTNKEDIAIQEAQRLGIPVAAIVDTNCDPKGITYLVPGNDDAGRAISLYCDLIARAVIDGISRAQGESGIDIGASSRPPREDLPAAQATGFQGLSGPRGTPDDLKKLAGVSGDIEKKFNDLGIFHYWQLAELNADTAHQIGEEVGLPGRVDGWVAQAKGLTAEAE.

This sequence belongs to the universal ribosomal protein uS2 family.

The polypeptide is Small ribosomal subunit protein uS2 (Rhodopseudomonas palustris (strain HaA2)).